The sequence spans 231 residues: Lipoprotein-releasing system ATP-binding protein LolD (231 aa).

The ABC transporter domain occupies 6 to 231; it reads LQVQAVSKSY…YLQAVAEHAQ (226 aa). 42 to 49 contributes to the ATP binding site; that stretch reads GTSGSGKS.

Belongs to the ABC transporter superfamily. Lipoprotein translocase (TC 3.A.1.125) family. As to quaternary structure, the complex is composed of two ATP-binding proteins (LolD) and two transmembrane proteins (LolC and LolE).

The protein resides in the cell inner membrane. Part of the ABC transporter complex LolCDE involved in the translocation of mature outer membrane-directed lipoproteins, from the inner membrane to the periplasmic chaperone, LolA. Responsible for the formation of the LolA-lipoprotein complex in an ATP-dependent manner. The chain is Lipoprotein-releasing system ATP-binding protein LolD from Shewanella sp. (strain MR-4).